The following is a 190-amino-acid chain: Potassium-transporting ATPase KdpC subunit (190 aa).

The chain crosses the membrane as a helical span at residues 10 to 30; it reads VLFAVLTLICGVIYPYAITGI.

It belongs to the KdpC family. The system is composed of three essential subunits: KdpA, KdpB and KdpC.

The protein resides in the cell inner membrane. In terms of biological role, part of the high-affinity ATP-driven potassium transport (or Kdp) system, which catalyzes the hydrolysis of ATP coupled with the electrogenic transport of potassium into the cytoplasm. This subunit acts as a catalytic chaperone that increases the ATP-binding affinity of the ATP-hydrolyzing subunit KdpB by the formation of a transient KdpB/KdpC/ATP ternary complex. This Herminiimonas arsenicoxydans protein is Potassium-transporting ATPase KdpC subunit.